Consider the following 476-residue polypeptide: Sulfite exporter TauE/SafE family protein 3 (476 aa).

Transmembrane regions (helical) follow at residues Trp-8–Val-28, Phe-76–Ala-92, Val-99–Phe-115, Ala-120–Leu-142, Ile-151–Gly-171, Val-172–Leu-192, Val-257–Ile-277, Val-291–Leu-311, Phe-339–Gly-359, Pro-360–Met-380, Phe-397–Gln-417, and Ile-433–Ile-453.

This sequence belongs to the 4-toluene sulfonate uptake permease (TSUP) (TC 2.A.102) family.

Its subcellular location is the membrane. The protein is Sulfite exporter TauE/SafE family protein 3 of Arabidopsis thaliana (Mouse-ear cress).